A 372-amino-acid polypeptide reads, in one-letter code: MNPKYKPLFEPFTFKSGVTINNRIAVAPMTHYASNEDGTISEAELDYIIPRSKEMGMVITACANVTPDGKAFPGQPAIHDDSNIPGLKKLAQAIQAQGAKAVVQIHHGGIECPSELVPQQDVVGPSDVFDNGKQIARALTEEEVENIVKAFGEATRRAIEAGFDGVEIHGANGYLIQQFYSPKTNQRTDRWGGSDEKRLAFPLAIVDEVKKAASEHAKGAFLVGYRLSPEEPETPGLTMTETYTLVDALGDKELDYLHISLMDVNSKARRGADPTRTRMDLLNERVGNKVPLIAVGSIHSADDALAVIENGIPLVAMGREILVDPNWTVKVKEGREKQIETVIKGTDKEKYHLPEPLWQAIVNTQGWVPYKD.

The protein belongs to the NADH:flavin oxidoreductase/NADH oxidase family.

This Bacillus subtilis (strain 168) protein is Probable NADH-dependent flavin oxidoreductase YqiG (yqiG).